A 709-amino-acid chain; its full sequence is Probable serine/threonine-protein kinase zyg-1 (709 aa).

The region spanning 13–251 (FQNLQQIGQG…LKEIVMTDYV (239 aa)) is the Protein kinase domain. ATP is bound by residues 19–27 (IGQGGFGVV) and K41. The Proton acceptor role is filled by D130. Disordered stretches follow at residues 254 to 329 (KMGE…DRAR) and 591 to 633 (SSSQ…PAAT). 2 stretches are compositionally biased toward basic and acidic residues: residues 262–291 (SREH…ERRP) and 302–313 (SRRDPDGYRAAH). Residues 607-627 (PLSSRTTSSLNVRNGVSSDEN) are compositionally biased toward polar residues.

The protein belongs to the protein kinase superfamily. Ser/Thr protein kinase family.

The protein resides in the cytoplasm. The protein localises to the cytoskeleton. Its subcellular location is the microtubule organizing center. It localises to the centrosome. It is found in the centriole. It catalyses the reaction L-seryl-[protein] + ATP = O-phospho-L-seryl-[protein] + ADP + H(+). The catalysed reaction is L-threonyl-[protein] + ATP = O-phospho-L-threonyl-[protein] + ADP + H(+). Its function is as follows. Protein kinase that plays a central role in centrosome duplication. Paternal copy is required to regulate synthesis of daughter centrioles prior to fertilization. Maternal copy regulates centrosome duplication during later cell cycles. Functions upstream of sas-5 and sas-6, and is required for their localization to the centrosome. The polypeptide is Probable serine/threonine-protein kinase zyg-1 (zyg-1) (Caenorhabditis briggsae).